Here is a 489-residue protein sequence, read N- to C-terminus: Rhamnulokinase (489 aa).

Position 13 to 17 (13 to 17) interacts with ATP; the sequence is ASSGR. An intrachain disulfide couples C68 to C222. Residues G83 and 236-238 each bind substrate; that span reads HDT. Catalysis depends on D237, which acts as the Proton acceptor. T259 contributes to the ATP binding site. Residue N296 coordinates substrate. Q304 serves as a coordination point for ATP. C353 and C370 are disulfide-bonded. G402 provides a ligand contact to ATP. The cysteines at positions 413 and 417 are disulfide-linked.

This sequence belongs to the rhamnulokinase family. Mg(2+) serves as cofactor.

It catalyses the reaction L-rhamnulose + ATP = L-rhamnulose 1-phosphate + ADP + H(+). The protein operates within carbohydrate degradation; L-rhamnose degradation; glycerone phosphate from L-rhamnose: step 2/3. Functionally, involved in the catabolism of L-rhamnose (6-deoxy-L-mannose). Catalyzes the transfer of the gamma-phosphate group from ATP to the 1-hydroxyl group of L-rhamnulose to yield L-rhamnulose 1-phosphate. The polypeptide is Rhamnulokinase (Shigella flexneri serotype 5b (strain 8401)).